The chain runs to 363 residues: Zinc finger CCCH domain-containing protein 53 (363 aa).

Residues 154–181 (KNRPKICSFYTIGQCKRGAECSFRHEMP) form a C3H1-type zinc finger. The region spanning 225 to 310 (KTLYVGGLNS…PPNEYSHYPS (86 aa)) is the RRM domain. The segment at 281 to 348 (LISQQQNQHS…SYSYPMPPHQ (68 aa)) is disordered. A compositionally biased stretch (low complexity) spans 283–297 (SQQQNQHSQMQQYYM). The span at 320-336 (FSTQESDGSSTSENNRA) shows a compositional bias: polar residues.

The polypeptide is Zinc finger CCCH domain-containing protein 53 (Arabidopsis thaliana (Mouse-ear cress)).